The following is a 90-amino-acid chain: MALNLEKKQEIIKAFATKENDTGSCEVQIALLNERIKLLTEHLKANPKDHSSRLGLLKLVAQRRNLLKYIKRTDHARYVVLIEKLGIKDR.

Belongs to the universal ribosomal protein uS15 family. Part of the 30S ribosomal subunit. Forms a bridge to the 50S subunit in the 70S ribosome, contacting the 23S rRNA.

Its function is as follows. One of the primary rRNA binding proteins, it binds directly to 16S rRNA where it helps nucleate assembly of the platform of the 30S subunit by binding and bridging several RNA helices of the 16S rRNA. Functionally, forms an intersubunit bridge (bridge B4) with the 23S rRNA of the 50S subunit in the ribosome. In Helicobacter pylori (strain Shi470), this protein is Small ribosomal subunit protein uS15.